The following is a 268-amino-acid chain: Ribosomal RNA small subunit methyltransferase A (268 aa).

6 residues coordinate S-adenosyl-L-methionine: asparagine 11, leucine 13, glycine 37, glutamate 58, aspartate 86, and asparagine 104.

Belongs to the class I-like SAM-binding methyltransferase superfamily. rRNA adenine N(6)-methyltransferase family. RsmA subfamily.

It is found in the cytoplasm. The catalysed reaction is adenosine(1518)/adenosine(1519) in 16S rRNA + 4 S-adenosyl-L-methionine = N(6)-dimethyladenosine(1518)/N(6)-dimethyladenosine(1519) in 16S rRNA + 4 S-adenosyl-L-homocysteine + 4 H(+). Functionally, specifically dimethylates two adjacent adenosines (A1518 and A1519) in the loop of a conserved hairpin near the 3'-end of 16S rRNA in the 30S particle. May play a critical role in biogenesis of 30S subunits. This chain is Ribosomal RNA small subunit methyltransferase A, found in Campylobacter fetus subsp. fetus (strain 82-40).